Here is a 459-residue protein sequence, read N- to C-terminus: tRNA modification GTPase MnmE (459 aa).

3 residues coordinate (6S)-5-formyl-5,6,7,8-tetrahydrofolate: arginine 23, glutamate 88, and arginine 127. In terms of domain architecture, TrmE-type G spans 223 to 381 (GLNTVIVGKP…FKEVIKELFF (159 aa)). Asparagine 233 contacts K(+). Residues 233-238 (NVGKSS), 252-258 (TDVPGTT), and 277-280 (DTAG) each bind GTP. Serine 237 is a Mg(2+) binding site. Residues threonine 252, valine 254, and threonine 257 each contribute to the K(+) site. Threonine 258 contributes to the Mg(2+) binding site. Lysine 459 serves as a coordination point for (6S)-5-formyl-5,6,7,8-tetrahydrofolate.

Belongs to the TRAFAC class TrmE-Era-EngA-EngB-Septin-like GTPase superfamily. TrmE GTPase family. Homodimer. Heterotetramer of two MnmE and two MnmG subunits. The cofactor is K(+).

Its subcellular location is the cytoplasm. In terms of biological role, exhibits a very high intrinsic GTPase hydrolysis rate. Involved in the addition of a carboxymethylaminomethyl (cmnm) group at the wobble position (U34) of certain tRNAs, forming tRNA-cmnm(5)s(2)U34. This chain is tRNA modification GTPase MnmE, found in Clostridium novyi (strain NT).